Here is a 159-residue protein sequence, read N- to C-terminus: Phosphopantetheine adenylyltransferase (159 aa).

T10 provides a ligand contact to substrate. Residues 10–11 (TF) and H18 each bind ATP. Positions 42, 74, and 88 each coordinate substrate. Residues 89–91 (GLR), E99, and 124–130 (WSFISSS) contribute to the ATP site.

This sequence belongs to the bacterial CoaD family. As to quaternary structure, homohexamer. Mg(2+) serves as cofactor.

It is found in the cytoplasm. The catalysed reaction is (R)-4'-phosphopantetheine + ATP + H(+) = 3'-dephospho-CoA + diphosphate. It functions in the pathway cofactor biosynthesis; coenzyme A biosynthesis; CoA from (R)-pantothenate: step 4/5. Its function is as follows. Reversibly transfers an adenylyl group from ATP to 4'-phosphopantetheine, yielding dephospho-CoA (dPCoA) and pyrophosphate. The protein is Phosphopantetheine adenylyltransferase of Escherichia coli O7:K1 (strain IAI39 / ExPEC).